The chain runs to 652 residues: tRNA 5-methylaminomethyl-2-thiouridine biosynthesis bifunctional protein MnmC (652 aa).

The interval Met-1–Ala-235 is tRNA (mnm(5)s(2)U34)-methyltransferase. The tract at residues Ile-259–Gly-652 is FAD-dependent cmnm(5)s(2)U34 oxidoreductase.

In the N-terminal section; belongs to the methyltransferase superfamily. tRNA (mnm(5)s(2)U34)-methyltransferase family. It in the C-terminal section; belongs to the DAO family. Requires FAD as cofactor.

The protein resides in the cytoplasm. It catalyses the reaction 5-aminomethyl-2-thiouridine(34) in tRNA + S-adenosyl-L-methionine = 5-methylaminomethyl-2-thiouridine(34) in tRNA + S-adenosyl-L-homocysteine + H(+). Its function is as follows. Catalyzes the last two steps in the biosynthesis of 5-methylaminomethyl-2-thiouridine (mnm(5)s(2)U) at the wobble position (U34) in tRNA. Catalyzes the FAD-dependent demodification of cmnm(5)s(2)U34 to nm(5)s(2)U34, followed by the transfer of a methyl group from S-adenosyl-L-methionine to nm(5)s(2)U34, to form mnm(5)s(2)U34. The polypeptide is tRNA 5-methylaminomethyl-2-thiouridine biosynthesis bifunctional protein MnmC (Burkholderia ambifaria (strain MC40-6)).